We begin with the raw amino-acid sequence, 1353 residues long: DNA-directed RNA polymerase subunit beta' (1353 aa).

The unknown stretch occupies residues 1-117; that stretch reads MSDNRLFTSV…AFQKLNDLFK (117 aa). Residues 118 to 1353 are DNA-directed RNA polymerase subunit beta'; it reads LYNHFPSISS…SELAEKTNQN (1236 aa). Zn(2+) contacts are provided by Cys-189, Cys-191, Cys-203, and Cys-206. Residues Asp-578, Asp-580, and Asp-582 each contribute to the Mg(2+) site.

The protein belongs to the RNA polymerase beta' chain family. In terms of assembly, the RNAP catalytic core consists of 2 alpha, 1 beta, 1 beta' and 1 omega subunit. When a sigma factor is associated with the core the holoenzyme is formed, which can initiate transcription. Mg(2+) serves as cofactor. Zn(2+) is required as a cofactor.

The enzyme catalyses RNA(n) + a ribonucleoside 5'-triphosphate = RNA(n+1) + diphosphate. Its function is as follows. DNA-dependent RNA polymerase catalyzes the transcription of DNA into RNA using the four ribonucleoside triphosphates as substrates. This Onion yellows phytoplasma (strain OY-M) protein is DNA-directed RNA polymerase subunit beta'.